The primary structure comprises 293 residues: Acidic endochitinase SE2 (293 aa).

Positions Met-1–Gly-25 are cleaved as a signal peptide. Residues Ser-26–Val-293 form the GH18 domain. Intrachain disulfides connect Cys-45–Cys-91 and Cys-75–Cys-81. Glu-151 acts as the Proton donor in catalysis. Cysteines 183 and 212 form a disulfide.

Belongs to the glycosyl hydrolase 18 family. Chitinase class II subfamily. In terms of tissue distribution, accumulates in leaves during infection.

Its subcellular location is the secreted. It is found in the extracellular space. It carries out the reaction Random endo-hydrolysis of N-acetyl-beta-D-glucosaminide (1-&gt;4)-beta-linkages in chitin and chitodextrins.. This protein functions as a defense against chitin containing fungal pathogens. This endochitinase also exhibits exochitinase activity, i.e. it is capable of hydrolyzing chito-oligosaccharides, including chitobiose. The sequence is that of Acidic endochitinase SE2 (SE2) from Beta vulgaris (Sugar beet).